Consider the following 167-residue polypeptide: Ion-translocating oxidoreductase complex subunit B (167 aa).

The segment at 1-22 (MITLIIFSFLSFLLGIILSFTA) is hydrophobic. In terms of domain architecture, 4Fe-4S spans 28-87 (QEDPIVAIVNELLPQSQCAQCGYSGCYPYAKAIVENSEKINKCIPGGTDLISAISSVLSI). [4Fe-4S] cluster-binding residues include C45, C48, C53, C70, C113, C116, C119, C123, C143, C146, C149, and C153. 2 consecutive 4Fe-4S ferredoxin-type domains span residues 104–133 (NTVLINESNCVGCSKCASFCPVDAIVGAPN) and 134–163 (FIHTVLQEFCTGCNICLLHCPTNCIEIKKE).

This sequence belongs to the 4Fe4S bacterial-type ferredoxin family. RnfB subfamily. In terms of assembly, the complex is composed of six subunits: RnfA, RnfB, RnfC, RnfD, RnfE and RnfG. [4Fe-4S] cluster is required as a cofactor.

The protein resides in the cell inner membrane. Functionally, part of a membrane-bound complex that couples electron transfer with translocation of ions across the membrane. This chain is Ion-translocating oxidoreductase complex subunit B, found in Buchnera aphidicola subsp. Acyrthosiphon pisum (strain 5A).